Consider the following 682-residue polypeptide: Methionine--tRNA ligase (682 aa).

Positions 14-24 match the 'HIGH' region motif; sequence PYANGSIHLGH. Zn(2+) contacts are provided by Cys145, Cys148, Cys158, and Cys161. Residues 331-335 carry the 'KMSKS' region motif; sequence KMSKS. Lys334 serves as a coordination point for ATP. A tRNA-binding domain is found at 580 to 682; the sequence is AFAAIDLRVA…SGARPGQRIK (103 aa).

It belongs to the class-I aminoacyl-tRNA synthetase family. MetG type 1 subfamily. Homodimer. Zn(2+) serves as cofactor.

Its subcellular location is the cytoplasm. The enzyme catalyses tRNA(Met) + L-methionine + ATP = L-methionyl-tRNA(Met) + AMP + diphosphate. Functionally, is required not only for elongation of protein synthesis but also for the initiation of all mRNA translation through initiator tRNA(fMet) aminoacylation. This is Methionine--tRNA ligase from Pseudomonas syringae pv. syringae (strain B728a).